The primary structure comprises 199 residues: NAD(P)H dehydrogenase (quinone) (199 aa).

A Flavodoxin-like domain is found at 4–190 (VLVLYYSSWG…DGARFQGRHV (187 aa)). Residues 10-15 (SSWGHV) and 78-80 (TRY) each bind FMN. Trp-12 is a binding site for NAD(+). Substrate is bound at residue Trp-98. FMN contacts are provided by residues 113–119 (STASQHG) and His-134.

The protein belongs to the WrbA family. It depends on FMN as a cofactor.

The catalysed reaction is a quinone + NADH + H(+) = a quinol + NAD(+). It catalyses the reaction a quinone + NADPH + H(+) = a quinol + NADP(+). In Methylorubrum extorquens (strain CM4 / NCIMB 13688) (Methylobacterium extorquens), this protein is NAD(P)H dehydrogenase (quinone).